A 124-amino-acid chain; its full sequence is MPTINQLVRQGAXAETIKSKSAAMENSPQRRGVCTRVYTTTPKKPNSALRKVAKVPLTNGFEVISYIGGEGHNLQEHSVVLVRGGRVKDLPGVRYHIVRGSLDLQGVKDRKQSRSKYGAKRPKK.

A 3-methylthioaspartic acid modification is found at Asp89. The interval 104 to 124 (LQGVKDRKQSRSKYGAKRPKK) is disordered. The segment covering 113–124 (SRSKYGAKRPKK) has biased composition (basic residues).

This sequence belongs to the universal ribosomal protein uS12 family. Part of the 30S ribosomal subunit. Contacts proteins S8 and S17. May interact with IF1 in the 30S initiation complex.

With S4 and S5 plays an important role in translational accuracy. Its function is as follows. Interacts with and stabilizes bases of the 16S rRNA that are involved in tRNA selection in the A site and with the mRNA backbone. Located at the interface of the 30S and 50S subunits, it traverses the body of the 30S subunit contacting proteins on the other side and probably holding the rRNA structure together. The combined cluster of proteins S8, S12 and S17 appears to hold together the shoulder and platform of the 30S subunit. This chain is Small ribosomal subunit protein uS12, found in Thiomonas delicata (Thiomonas cuprina).